Reading from the N-terminus, the 241-residue chain is NH(3)-dependent NAD(+) synthetase (241 aa).

27-34 (GISGGIDS) serves as a coordination point for ATP. Aspartate 33 lines the Mg(2+) pocket. Arginine 109 serves as a coordination point for deamido-NAD(+). Threonine 129 is a binding site for ATP. Glutamate 134 contacts Mg(2+). 2 residues coordinate deamido-NAD(+): lysine 142 and aspartate 149. Lysine 158 and threonine 180 together coordinate ATP. 231 to 232 (HK) serves as a coordination point for deamido-NAD(+).

This sequence belongs to the NAD synthetase family. Homodimer.

The catalysed reaction is deamido-NAD(+) + NH4(+) + ATP = AMP + diphosphate + NAD(+) + H(+). Its pathway is cofactor biosynthesis; NAD(+) biosynthesis; NAD(+) from deamido-NAD(+) (ammonia route): step 1/1. Its function is as follows. Catalyzes the ATP-dependent amidation of deamido-NAD to form NAD. Uses ammonia as a nitrogen source. In Thermoplasma acidophilum (strain ATCC 25905 / DSM 1728 / JCM 9062 / NBRC 15155 / AMRC-C165), this protein is NH(3)-dependent NAD(+) synthetase.